A 187-amino-acid polypeptide reads, in one-letter code: Biphenyl 2,3-dioxygenase subunit beta (187 aa).

This sequence belongs to the bacterial ring-hydroxylating dioxygenase beta subunit family. As to quaternary structure, heterohexamer consisting of three BphA1 subunits and three BphA2 subunits. The multicomponent biphenyl dioxygenase system is composed of a ferredoxin reductase (BphA4), a ferredoxin (BphA3), and a terminal oxygenase (BphA1A2).

It catalyses the reaction biphenyl + NADH + O2 + H(+) = (2R,3S)-3-phenylcyclohexa-3,5-diene-1,2-diol + NAD(+). It functions in the pathway xenobiotic degradation; biphenyl degradation; 2-hydroxy-2,4-pentadienoate and benzoate from biphenyl: step 1/4. In terms of biological role, part of the oxygenase component of the biphenyl dioxygenase system that catalyzes the stereospecific dihydroxylation of the aromatic ring of biphenyl, yielding a dihydrodiol compound. Is likely involved in biphenyl degradation that allows growth of Rhodococcus sp. strain RHA1 on biphenyl as the sole source of carbon and energy. Can also use naphtalene and 4-chlorobiphenyl (4-CB) as substrates, as well as some polychlorinated biphenyls (PCB) such as 2,2'-dichlorobiphenyl, 2,3-dichlorobiphenyl and 2,5,2'-trichlorobiphenyl. Exhibits weak activity toward dibenzofuran and dibenzo-p-dioxin. Electrons are transferred from NADH to the [2Fe-2S] cluster in BphA1 via FAD of BphA4 and [2Fe-2S] cluster of BphA3. This chain is Biphenyl 2,3-dioxygenase subunit beta, found in Rhodococcus jostii (strain RHA1).